The sequence spans 536 residues: CUGBP Elav-like family member 2 (536 aa).

RRM domains lie at 58-141, 150-230, and 451-529; these read IKMF…PADS, RKLF…FADT, and ANLF…LKRS.

It belongs to the CELF/BRUNOL family.

The protein localises to the nucleus. The protein resides in the cytoplasm. Functionally, RNA-binding protein implicated in the regulation of several post-transcriptional events. May be involved in pre-mRNA alternative splicing, mRNA translation repression and stability. This chain is CUGBP Elav-like family member 2 (celf2), found in Xenopus laevis (African clawed frog).